The following is a 179-amino-acid chain: Large ribosomal subunit protein uL5 (179 aa).

Belongs to the universal ribosomal protein uL5 family. As to quaternary structure, part of the 50S ribosomal subunit; part of the 5S rRNA/L5/L18/L25 subcomplex. Contacts the 5S rRNA and the P site tRNA. Forms a bridge to the 30S subunit in the 70S ribosome.

This is one of the proteins that bind and probably mediate the attachment of the 5S RNA into the large ribosomal subunit, where it forms part of the central protuberance. In the 70S ribosome it contacts protein S13 of the 30S subunit (bridge B1b), connecting the 2 subunits; this bridge is implicated in subunit movement. Contacts the P site tRNA; the 5S rRNA and some of its associated proteins might help stabilize positioning of ribosome-bound tRNAs. The protein is Large ribosomal subunit protein uL5 of Chromohalobacter salexigens (strain ATCC BAA-138 / DSM 3043 / CIP 106854 / NCIMB 13768 / 1H11).